The primary structure comprises 216 residues: Transmembrane emp24 domain-containing protein eca (216 aa).

The N-terminal stretch at 1–20 (MRDQFISLALILCVLHSACG) is a signal peptide. Residues 21–182 (LYFHISETER…FRHTSESTNS (162 aa)) lie on the Lumenal side of the membrane. A GOLD domain is found at 30–126 (RKCFIEEVPD…QLRVHLDIQV (97 aa)). Residues 134–164 (ANVAQKEKLTELQLRIRQLLDQVEQITKEQN) adopt a coiled-coil conformation. The helical transmembrane segment at 183-203 (RVLWWSLAQTIVLVCMGFWQM) threads the bilayer. Over 204–216 (RHLKSFFEAKKLV) the chain is Cytoplasmic. Residues 213–216 (KKLV) carry the Prevents secretion from ER motif.

It belongs to the EMP24/GP25L family.

It is found in the endoplasmic reticulum membrane. Its function is as follows. Eca and bai are essential, though not redundant, for dorsoventral patterning of the embryo. Specifically required during early embryogenesis for the activity of maternal tkv, while the zygotic tkv is not affected. Involved in Golgi organization. This Drosophila sechellia (Fruit fly) protein is Transmembrane emp24 domain-containing protein eca.